Reading from the N-terminus, the 587-residue chain is Putative inactive receptor-like protein kinase At1g64210 (587 aa).

The first 19 residues, 1-19 (MQIFLFFFSLILCFVLISS), serve as a signal peptide directing secretion. Residues 20 to 232 (QTLEDDKKAL…KTPFGLSQLA (213 aa)) are Extracellular-facing. N-linked (GlcNAc...) asparagine glycosylation is found at asparagine 37 and asparagine 44. 5 LRR repeats span residues 89 to 112 (SLKF…TNLK), 113 to 136 (SLTH…SELK), 137 to 160 (NLKV…SGLT), 161 to 183 (SLQV…HLPK), and 184 to 205 (LSQI…LQRF). Asparagine 149, asparagine 169, asparagine 188, and asparagine 214 each carry an N-linked (GlcNAc...) asparagine glycan. A helical transmembrane segment spans residues 233–253 (FLLILSAACVLCVSGLSFIMI). Topologically, residues 254 to 587 (TCFGKTRISG…IEDIRSVDAE (334 aa)) are cytoplasmic. Residues 307–581 (SSSAEVLGKG…AQVLKLIEDI (275 aa)) form the Protein kinase domain. Serine 309 carries the post-translational modification Phosphoserine. ATP contacts are provided by residues 313-321 (LGKGAFGTT) and lysine 335. Serine 386 carries the phosphoserine modification. Phosphothreonine occurs at positions 462, 463, 466, and 477.

Its subcellular location is the cell membrane. This chain is Putative inactive receptor-like protein kinase At1g64210, found in Arabidopsis thaliana (Mouse-ear cress).